The sequence spans 62 residues: Conotoxin Cal12.2e (62 aa).

An N-terminal signal peptide occupies residues 1–19 (MKLTCVLVVLLLVLPFGDL).

It belongs to the conotoxin O1 superfamily. In terms of processing, contains 4 disulfide bonds. Expressed by the venom duct.

The protein resides in the secreted. Probable neurotoxin. In Californiconus californicus (California cone), this protein is Conotoxin Cal12.2e.